The chain runs to 7354 residues: Microtubule-actin cross-linking factor 1, isoforms 1/2/3/4 (7354 aa).

The interval 1–47 (MSSSDEETLSERSCRSERSCRSERSYRSERSGSLSPCPPGDTLPWNL) is disordered. Residues 1 to 295 (MSSSDEETLS…VITYVSSIYD (295 aa)) form an actin-binding region. Ser-4 is modified (phosphoserine). The segment covering 9–30 (LSERSCRSERSCRSERSYRSER) has biased composition (basic and acidic residues). The residue at position 35 (Ser-35) is a Phosphoserine. The residue at position 42 (Thr-42) is a Phosphothreonine. Ser-57 carries the phosphoserine modification. Calponin-homology (CH) domains follow at residues 78 to 181 (RVQK…LHFQ) and 194 to 298 (MSAK…DAFP). An LRR 1 repeat occupies 148–171 (QRQVKLVNIRNDDITDGNPKLTLG). Ser-280 is modified (phosphoserine). LRR repeat units follow at residues 377 to 399 (LYKLLEVWIEFGRIKLPQGYHPN) and 441 to 464 (LNCEEKLTLAKNTLQADAAHLESG). Positions 868–925 (KSTLSVKAICDYRQIEITICKNDECVLEDNSQRTKWKVISPTGNEAMVPSVCFLIPPP) constitute an SH3 domain. Residues 1050–1073 (ISELKNIRLLLEECEQRLLKQIQS) form an LRR 5 repeat. Phosphoserine is present on Ser-1122. LRR repeat units follow at residues 1128 to 1154 (ATTLRSELNLMVEKMDHVYGLSTVYLN), 1187 to 1210 (PADLSALESHRTTLQHWLSDVKDK), and 1257 to 1282 (HRVIAQLETRQSEVESIQEVLRDYRA). 2 positions are modified to phosphoserine: Ser-1367 and Ser-1376. Plectin repeat units follow at residues 1577 to 1619 (LVLL…QLLG), 1654 to 1696 (LKVL…ELQS), 1769 to 1809 (RLLE…CAIL), 1811 to 1848 (RQLQTGGIIDTVTGDRMTIDEAVTNNLVAAKIALVILE), and 1855 to 1885 (GLLLPESGEILPITDALEQGIVSTELAHKIL). Ser-2051, Ser-2077, and Ser-2081 each carry phosphoserine. Basic and acidic residues-rich tracts occupy residues 2120 to 2131 (KEEQAETLREEN) and 2145 to 2155 (SEGKDLSTEKS). Residues 2120–2155 (KEEQAETLREENISGDPLLVECPEESEGKDLSTEKS) are disordered. Plectin repeat units follow at residues 2276–2316 (STLS…VKLM), 2352–2393 (NVLM…RILE), 2394–2425 (GQVITGGIVDLKRGKKLSVTLASNLGLVDTAD), 2487–2528 (LLTK…LRKV), and 2671–2715 (LKVL…ASHQ). Disordered stretches follow at residues 2806-2841 (AGIRGSNGEKAEKGRKISVEMEGQRQDEKASSDSKV), 2951-2978 (EMGGEQSVQMSREAAVLSEEESDQEVTI), and 3058-3099 (SQET…HISK). The segment covering 2812–2837 (NGEKAEKGRKISVEMEGQRQDEKASS) has biased composition (basic and acidic residues). Acidic residues predominate over residues 2968–2978 (SEEESDQEVTI). Phosphoserine is present on residues Ser-3082 and Ser-3085. LRR repeat units follow at residues 3225-3244 (VGQRGPRVLASLLPEKLPTR), 3606-3630 (SGKSSLLCAEPKVDLKDLQGDIQSH), and 3657-3681 (LTALREKLHQAKEQYEVLQERTRVA). Spectrin repeat units follow at residues 3845 to 3920 (ELQK…NFEE) and 3962 to 4070 (QYQQ…ALLQ). Position 3889 is a phosphoserine (Ser-3889). One copy of the LRR 12 repeat lies at 3898-3920 (KGDLRFVTISGQKVLETENNFEE). LRR repeat units lie at residues 4087–4112 (LQSIREVEQNLERDQVASLSSGVIQE) and 4223–4249 (IQELTLAMEDQKENLDTLEHLVTTLGS). The Spectrin 3 repeat unit spans residues 4428–4536 (RMEEVQKEAS…TVARQKQLEE (109 aa)). Ser-4458 and Ser-4483 each carry phosphoserine. LRR repeat units follow at residues 4473–4496 (KAFLAELEQNSPKIQKVKEALAGL), 4563–4583 (GVLGPLSIDPNMLKQQVQFML), and 4728–4751 (KKRLETVALPLQGLEDLAADRMNR). The stretch at 4759–4863 (TQQFQQMFDE…KTANRQSRLK (105 aa)) is one Spectrin 4 repeat. A Phosphoserine modification is found at Ser-4921. LRR repeat units lie at residues 5010-5035 (NKNLEKLKAQQEVLQALEPQVDYLRN), 5131-5153 (NKIQALRFDIEDSEAECRKMLEE), and 5240-5263 (KDQVDPLQVKLQQVNGLGQGLIQS). Spectrin repeat units lie at residues 5195-5300 (EDFY…QLQE), 5307-5409 (KFQD…QLED), 5414-5506 (AKQF…ADIT), 5631-5735 (RSQQ…ARLE), 5742-5844 (NQFW…ALDE), 5961-6066 (LAEK…KLED), 6071-6175 (AVQY…HKLE), 6181-6284 (LGQF…QQLQ), 6289-6395 (QAQG…KLEE), 6400-6503 (ATEF…RSLD), 6508-6614 (RAKQ…KLEE), 6621-6722 (QFMD…RLEQ), and 6726-6830 (QAEE…QRLE). Position 5394 is a phosphothreonine (Thr-5394). 2 LRR repeats span residues 5654–5678 (MALGPIRLEQDQTTAQLQVQKAFSI) and 5763–5787 (AQLPPPAVDHEQLRQQQEEMRQLRE). The residue at position 5988 (Ser-5988) is a Phosphoserine. An N6-acetyllysine modification is found at Lys-6166. Residues 6452–6475 (RDQIIELDQTGNQLKFLSQKQDVV) form an LRR 23 repeat. A disordered region spans residues 6904–6937 (SVEPTHAPFMEKSRSGSRKSLNQPTPPPMPILSQ). Position 6923 is a phosphoserine (Ser-6923). EF-hand domains are found at residues 7001 to 7036 (HKKSRVMDFFRRIDKDQDGKITRQEFIDGILASKFP) and 7037 to 7072 (TTKLEMTAVADIFDRDGDGYIDYYEFVAALHPNKDA). Asp-7014, Asp-7016, Asp-7018, Lys-7020, Glu-7025, Asp-7050, Asp-7052, Asp-7054, Tyr-7056, and Glu-7061 together coordinate Ca(2+). Positions 7077–7155 (TDADKIEDEV…EFLVKNDPCR (79 aa)) constitute a GAR domain. Positions 7077–7354 (TDADKIEDEV…ASPRTPGPKR (278 aa)) are C-terminal tail. The interval 7171-7354 (PEGASQGMTP…ASPRTPGPKR (184 aa)) is disordered. Over residues 7191 to 7225 (SSRAASPTRSSSSASQSNHSCTSMPSSPATPASGT) the composition is skewed to low complexity. A Phosphothreonine modification is found at Thr-7220. Residues 7242–7261 (FHSSRTSLAGDTSNSSSPAS) show a composition bias toward polar residues. A phosphoserine mark is found at Ser-7245 and Ser-7258. A compositionally biased stretch (low complexity) spans 7276–7290 (SRPGSRAGSRAGSRA). Positions 7279–7294 (GSRAGSRAGSRASSRR) are 4 X 4 AA tandem repeats of [GS]-S-R-[AR]. A phosphoserine mark is found at Ser-7296 and Ser-7299. A compositionally biased stretch (polar residues) spans 7305-7315 (ETQSACSDTSE). Residues 7316 to 7327 (SSAAGGQGSSRR) show a composition bias toward low complexity.

Belongs to the plakin or cytolinker family. In terms of assembly, interacts with AXIN1, LRP6 and GOLGA4. Found in a complex composed of MACF1, APC, AXIN1, CTNNB1 and GSK3B. Interacts with MAPRE1, CLASP1 and CLASP2. Interacts with CAMSAP3. Post-translationally, phosphorylated on serine residues in the C-terminal tail by GSK3B. Phosphorylation inhibits microtubule-binding and this plays a critical role in bulge stem cell migration and skin wound repair. Wnt-signaling can repress phosphorylation. Enriched in the hair follicle stem cells (at protein level). Isoform 1 and isoform 2 are ubiquitous expressed, with higher levels seen in lung, heart, thymus, spleen and brain.

The protein resides in the cytoplasm. Its subcellular location is the cytoskeleton. It is found in the golgi apparatus. It localises to the cell membrane. The protein localises to the cell projection. The protein resides in the ruffle membrane. In terms of biological role, F-actin-binding protein which plays a role in cross-linking actin to other cytoskeletal proteins and also binds to microtubules. Plays an important role in ERBB2-dependent stabilization of microtubules at the cell cortex. Acts as a positive regulator of Wnt receptor signaling pathway and is involved in the translocation of AXIN1 and its associated complex (composed of APC, CTNNB1 and GSK3B) from the cytoplasm to the cell membrane. Has actin-regulated ATPase activity and is essential for controlling focal adhesions (FAs) assembly and dynamics. Interaction with CAMSAP3 at the minus ends of non-centrosomal microtubules tethers microtubules minus-ends to actin filaments, regulating focal adhesion size and cell migration. May play role in delivery of transport vesicles containing GPI-linked proteins from the trans-Golgi network through its interaction with GOLGA4. Plays a key role in wound healing and epidermal cell migration. Required for efficient upward migration of bulge cells in response to wounding and this function is primarily rooted in its ability to coordinate microtubule dynamics and polarize hair follicle stem cells. As a regulator of actin and microtubule arrangement and stabilization, it plays an essential role in neurite outgrowth, branching and spine formation during brain development. The polypeptide is Microtubule-actin cross-linking factor 1, isoforms 1/2/3/4 (Mus musculus (Mouse)).